The primary structure comprises 527 residues: Plant-specific TFIIB-related protein PTF2 (527 aa).

The TFIIB-type zinc finger occupies 1–30 (MRCKRCNGSNFERDEDTGNSYCGGCGTLRE).

As to quaternary structure, can form homodimer. Interacts with TBP2. In terms of tissue distribution, expressed in shoot apical meristems, root tips, primordia of lateral roots, inflorescences, developing pollen grains and embryos.

Its subcellular location is the nucleus. Plant-specific TFIIB-related protein that plays important roles in pollen germination and embryogenesis, possibly by regulating gene expression through interaction with TBP2 and the subunits of RNA polymerases. Binds double-stranded DNA in vitro. This chain is Plant-specific TFIIB-related protein PTF2, found in Arabidopsis thaliana (Mouse-ear cress).